A 278-amino-acid chain; its full sequence is Urease accessory protein UreD 3 (278 aa).

The protein belongs to the UreD family. UreD, UreF and UreG form a complex that acts as a GTP-hydrolysis-dependent molecular chaperone, activating the urease apoprotein by helping to assemble the nickel containing metallocenter of UreC. The UreE protein probably delivers the nickel.

It localises to the cytoplasm. Required for maturation of urease via the functional incorporation of the urease nickel metallocenter. The protein is Urease accessory protein UreD 3 of Bradyrhizobium sp. (strain BTAi1 / ATCC BAA-1182).